The chain runs to 427 residues: MHILSISLMAVLPAIALAGLCGVEPDAGLLDQRLNLYKGQQNFAVSMLNVIRQSTPNENVFFSPYSTYHALLLAYFGSSGDTEKELAKVLHLDWADSKEVVRSAYILEKMNRKERQSKMPLEFSSADRIFFANDLHVTECARNRLAEEVQQIDFKSQTEESRKQINDWIAKQTHDQIRNMLSADEITPRTRLVLANAAYLKGQWLSQFKTEKTVPMPFYTSPSNYSLVSMMQQKGTFLLNVDEQLRAHVLQLPYRTVFESQEKEDSSPDENSDISMVLILPPFNSNSLEDVLSRLNADSLDDSLKQAMPREIEVSLPKFEFEQRLELNPILAKMGVSKMFDESVATFDDLTSETISIGDSKHVAKIKVDEEGSTAAAATVLFTYRSARPVEPAKFECNHPFLFVIYDRTSRSILFTGIYRDPKTIKQ.

The first 18 residues, 1 to 18, serve as a signal peptide directing secretion; that stretch reads MHILSISLMAVLPAIALA. Asparagine 224 carries N-linked (GlcNAc...) asparagine glycosylation.

This sequence belongs to the serpin family. Expressed in nurse cells and oocytes. Expressed in wings.

It localises to the secreted. Functionally, serine protease inhibitor with activity toward trypsin. Negatively regulates the Toll signaling pathway and suppresses the expression of the antifungal peptide drosomycin. Its negative regulation of the Toll signaling pathway also results in the inhibition of the melanization immune response via the phenoloxidase (PPO1) cascade. Essential for unfolding and expansion of the wings after emergence from the pupal case. May regulate the Toll pathway by blocking the proteolysis of the Toll ligand spz. The sequence is that of Serine protease inhibitor 88Ea from Drosophila melanogaster (Fruit fly).